A 614-amino-acid chain; its full sequence is MDGSVAKGTSCIQDSQSSSVIANTDATLGRHLARRLVEIGIQDVFSVPGDFNLTLLDHLIAEPRLKNIGCCNELNAGYAADGYARARGVGACVVTFTVGGLSVLNAIAGAYSENLPVICIVGGPNTNDYGTNRILHHTIGLPDFSQELRCFQTVTCYQAVVNNLDDAHEQIDRAISTALKESKPVYISISCNLPAIPHPTFSRDPIPFSLSPRLSNKRGLEAAVDAAVTFLSKAVKPVMIGGPKLRVAKACDAFVELADSSGYAMAVMLQPKGLVAEQHPHFIGTYWGAVGTSYCAEIVESADAYLFAGPIFNDYSSVGYSLLIKKEKSIIVQPDRVVIGNGPAFGCVLMKDFLSELAKKIKKNETAYENYRRIFVPEGTPLKSEPNEPLRVNVLFQHIQKMLSDETAVIAETGDSWFNCQKLKLPEGCGYVTNNSLSAWYPFYLQTLEEKSSCCRYEFQMQYGSIGWSVGATLGYAQSVPKKRVISCIGDGSFQVTAQDVSTMIRCEQKNIIFLINNGGYTIEVEIHDGPYNVIKNWNYTGLVDAIHNGEGNCWTMKVRTEEELTEAIATATGEKKDCLCFIEVIVHKDDTSKELLEWGSRVCSANGRPPNPQ.

Residues Asp-50 and His-137 each coordinate substrate. Residues 415 to 523 (DSWFNCQKLK…FLINNGGYTI (109 aa)) form a thiamine pyrophosphate binding region. Residues Asp-491, Asn-518, and Gly-520 each contribute to the Mg(2+) site. A substrate-binding site is contributed by Glu-524.

The protein belongs to the TPP enzyme family. Homotetramer. A metal cation serves as cofactor. Thiamine diphosphate is required as a cofactor. Pollen.

It carries out the reaction a 2-oxocarboxylate + H(+) = an aldehyde + CO2. The protein is Pyruvate decarboxylase 2 (PDC2) of Nicotiana tabacum (Common tobacco).